A 515-amino-acid polypeptide reads, in one-letter code: Maturase K (515 aa).

The protein belongs to the intron maturase 2 family. MatK subfamily.

It localises to the plastid. Its subcellular location is the chloroplast. In terms of biological role, usually encoded in the trnK tRNA gene intron. Probably assists in splicing its own and other chloroplast group II introns. This chain is Maturase K, found in Pinus clausa (Sand pine).